The chain runs to 404 residues: Tryptophan synthase beta chain (404 aa).

At lysine 98 the chain carries N6-(pyridoxal phosphate)lysine.

The protein belongs to the TrpB family. Tetramer of two alpha and two beta chains. Pyridoxal 5'-phosphate serves as cofactor.

It carries out the reaction (1S,2R)-1-C-(indol-3-yl)glycerol 3-phosphate + L-serine = D-glyceraldehyde 3-phosphate + L-tryptophan + H2O. It functions in the pathway amino-acid biosynthesis; L-tryptophan biosynthesis; L-tryptophan from chorismate: step 5/5. Its function is as follows. The beta subunit is responsible for the synthesis of L-tryptophan from indole and L-serine. The polypeptide is Tryptophan synthase beta chain (Acidiphilium cryptum (strain JF-5)).